The sequence spans 428 residues: Sulfhydrogenase 1 subunit alpha (428 aa).

Ni(2+) is bound by residues C65, C68, C418, and C421. C68 is a binding site for Fe cation. C421 lines the Fe cation pocket.

It belongs to the [NiFe]/[NiFeSe] hydrogenase large subunit family. Heterotetramer of alpha, beta, gamma and delta subunits. The nickel-containing alpha and delta subunits constitute the hydrogenase activity. The beta and gamma subunits (flavin-containing dimer) constitute the sulfur reductase activity. Requires Ni(2+) as cofactor. Fe cation is required as a cofactor.

The protein localises to the cytoplasm. It carries out the reaction H2 + NADP(+) = NADPH + H(+). Its function is as follows. Part of a bifunctional enzyme complex that functions as an NADPH-dependent hydrogen-evolving hydrogenase with sulfur-reducing activity. May play a role in hydrogen cycling during fermentative growth. Activity not exhibited with NAD. The alpha and delta subunits form the hydrogenase component that catalyzes the reduction of protons to evolve hydrogen. This Pyrococcus furiosus (strain ATCC 43587 / DSM 3638 / JCM 8422 / Vc1) protein is Sulfhydrogenase 1 subunit alpha.